Here is a 351-residue protein sequence, read N- to C-terminus: Cobalt-precorrin-5B C(1)-methyltransferase (351 aa).

The protein belongs to the CbiD family.

It carries out the reaction Co-precorrin-5B + S-adenosyl-L-methionine = Co-precorrin-6A + S-adenosyl-L-homocysteine. It functions in the pathway cofactor biosynthesis; adenosylcobalamin biosynthesis; cob(II)yrinate a,c-diamide from sirohydrochlorin (anaerobic route): step 6/10. Its function is as follows. Catalyzes the methylation of C-1 in cobalt-precorrin-5B to form cobalt-precorrin-6A. This is Cobalt-precorrin-5B C(1)-methyltransferase from Thermosipho africanus (strain TCF52B).